Here is a 346-residue protein sequence, read N- to C-terminus: Putative toluene-4-sulfonate monooxygenase system iron-sulfur subunit TsaM2 (346 aa).

Residues 7–108 (WYVAGMATDC…LVERHGLLWI (102 aa)) form the Rieske domain. Residues C47, H49, C66, and H69 each contribute to the [2Fe-2S] cluster site.

In terms of assembly, homotetramer. Part of the p-toluenesulfonate methyl-monooxygenase complex TsaBM, comprising the reductase TsaB and the oxygenase TsaM. It depends on [2Fe-2S] cluster as a cofactor.

The catalysed reaction is toluene-4-sulfonate + NADH + O2 + H(+) = 4-(hydroxymethyl)benzenesulfonate + NAD(+) + H2O. In terms of biological role, involved in the toluene-4-sulfonate degradation pathway. Does not discriminate between the sulfonate and the carboxyl substituents and can also be involved in the p-toluenecarboxylate degradation pathway. This is Putative toluene-4-sulfonate monooxygenase system iron-sulfur subunit TsaM2 (tsaM2) from Comamonas testosteroni (Pseudomonas testosteroni).